The primary structure comprises 445 residues: MSNRKYFGTDGIRGKVGDTPITPDFVLKLGWAAGKVLARHGSRKIIIGKDTRISGYMLESALEAGLAAAGLSASFTGPMPTPAVAYLTRTFRAEAGIVISASHNPYYDNGIKFFSIDGTKLPDDVEEAIEAEMEKPLTCVESSELGKASRIVDAAGRYIEFCKGTFPGELSLNGLKIVVDCANGATYHIAPSVLRELGAKVIAIGCEPDGMNINEECGATDVRQLQARVLAEKADVGLAFDGDGDRLIMVDHLGNKVDGDQILYIIAREGLRQGQLRGGAVGTLMSNMGLEVALKQLGIPFARAKVGDRYVLEMMQTKGWRIGAENSGHVILLDKTTTGDGVIAGLQVLTAIVKNHMSLHDLCSGMKLFPQILVNVRFTGENDPLEDKSVQQITQDVEKELAGRGRVLLRKSGTEPLIRVMVEGEHEETVIAQANRIADAVKAVS.

Serine 102 serves as the catalytic Phosphoserine intermediate. Residues serine 102, aspartate 241, aspartate 243, and aspartate 245 each coordinate Mg(2+). Serine 102 is subject to Phosphoserine.

The protein belongs to the phosphohexose mutase family. Mg(2+) is required as a cofactor. Activated by phosphorylation.

The enzyme catalyses alpha-D-glucosamine 1-phosphate = D-glucosamine 6-phosphate. Functionally, catalyzes the conversion of glucosamine-6-phosphate to glucosamine-1-phosphate. The protein is Phosphoglucosamine mutase of Pectobacterium atrosepticum (strain SCRI 1043 / ATCC BAA-672) (Erwinia carotovora subsp. atroseptica).